Consider the following 234-residue polypeptide: MARNGPPGRGRSSLPFCLSRGVNCGQSRGMTQPDYQLEAALAAQGHIRIAGVDEVGRGPLAGPVVAAAVVLDPGAIPEGLNDSKKLTAARRERLYDILHANAQVSIAEASVEEIDALNILRASHLAMERAVAALNPAPDFLLIDGNLIPAGLSCPAEAVIKGDGRSVSIAAASIVAKTWRDRLMVDLAQQHPGYGWERNAGYPTKEHRSALQNLGVTPHHRRSFKTVHKILYQE.

Positions 47–234 constitute an RNase H type-2 domain; it reads IRIAGVDEVG…KTVHKILYQE (188 aa). Asp-53, Glu-54, and Asp-144 together coordinate a divalent metal cation.

The protein belongs to the RNase HII family. It depends on Mn(2+) as a cofactor. Requires Mg(2+) as cofactor.

It localises to the cytoplasm. The enzyme catalyses Endonucleolytic cleavage to 5'-phosphomonoester.. In terms of biological role, endonuclease that specifically degrades the RNA of RNA-DNA hybrids. The protein is Ribonuclease HII of Ruegeria pomeroyi (strain ATCC 700808 / DSM 15171 / DSS-3) (Silicibacter pomeroyi).